The primary structure comprises 135 residues: Regulator of ribonuclease activity B (135 aa).

Positions 114–135 (WGTYFESDEDDEEDESEDKPEA) are disordered. A compositionally biased stretch (acidic residues) spans 119-135 (ESDEDDEEDESEDKPEA).

This sequence belongs to the RraB family. In terms of assembly, interacts with the C-terminal region of Rne.

The protein localises to the cytoplasm. Functionally, globally modulates RNA abundance by binding to RNase E (Rne) and regulating its endonucleolytic activity. Can modulate Rne action in a substrate-dependent manner by altering the composition of the degradosome. This is Regulator of ribonuclease activity B from Photobacterium profundum (strain SS9).